Consider the following 446-residue polypeptide: Putative F-box protein At1g32660 (446 aa).

Basic and acidic residues-rich tracts occupy residues 1–12 (MKRKDDDQEDRS) and 43–57 (NKLE…NPSK). The tract at residues 1–57 (MKRKDDDQEDRSCSSASKLDPIPLDLKMATVPTKSHMKKSHQNKLEEDEKEDTNPSK) is disordered. The F-box domain occupies 57 to 107 (KLELDSLPLDLKMAILTRIPAKSLMKLRCVSKMWSSIIRSRGFIDSYYAIS).

The sequence is that of Putative F-box protein At1g32660 from Arabidopsis thaliana (Mouse-ear cress).